Here is a 62-residue protein sequence, read N- to C-terminus: Conotoxin Lt5.8 (62 aa).

Positions 1-19 (MLCLPVFIILLLLVSPAAT) are cleaved as a signal peptide. Residues 20 to 47 (MPVDLEILKAPTKESRKDFEMRIELLRS) constitute a propeptide that is removed on maturation. Pyrrolidone carboxylic acid is present on Q50. Q61 is subject to Glutamine amide.

It belongs to the conotoxin T superfamily. Contains 2 disulfide bonds that can be either 'C1-C3, C2-C4' or 'C1-C4, C2-C3', since these disulfide connectivities have been observed for conotoxins with cysteine framework V (for examples, see AC P0DQQ7 and AC P81755). In terms of tissue distribution, expressed by the venom duct.

The protein resides in the secreted. The polypeptide is Conotoxin Lt5.8 (Conus litteratus (Lettered cone)).